We begin with the raw amino-acid sequence, 216 residues long: Adenylate kinase (216 aa).

Position 10-15 (10-15) interacts with ATP; sequence GAGKGT. The interval 30–59 is NMP; that stretch reads STGDIFRYNIKQGTELGKKAKSYMDQGLLV. AMP contacts are provided by residues Thr-31, Arg-36, 57-59, 85-88, and Gln-92; these read LLV and GFPR. The interval 126-163 is LID; it reads GRRICRECGATFHVQYNPSTKGALCDQCGGELYQRDDD. An ATP-binding site is contributed by Arg-127. Residues Cys-130 and Cys-133 each contribute to the Zn(2+) site. 136 to 137 serves as a coordination point for ATP; that stretch reads TF. Zn(2+)-binding residues include Cys-150 and Cys-153. AMP is bound by residues Arg-160 and Arg-171. Lys-199 provides a ligand contact to ATP.

It belongs to the adenylate kinase family. Monomer.

It localises to the cytoplasm. It carries out the reaction AMP + ATP = 2 ADP. The protein operates within purine metabolism; AMP biosynthesis via salvage pathway; AMP from ADP: step 1/1. Functionally, catalyzes the reversible transfer of the terminal phosphate group between ATP and AMP. Plays an important role in cellular energy homeostasis and in adenine nucleotide metabolism. This is Adenylate kinase from Alkaliphilus oremlandii (strain OhILAs) (Clostridium oremlandii (strain OhILAs)).